The primary structure comprises 594 residues: Transcriptional repressor p66-beta (594 aa).

Ser-17 is modified (phosphoserine). Glycyl lysine isopeptide (Lys-Gly) (interchain with G-Cter in SUMO2) cross-links involve residues Lys-33 and Lys-66. Residues 62-143 (ELPTKQDGSG…ASSPRSSSRM (82 aa)) form a disordered region. Residues 74–89 (GYEEKLNGNLRPHGDN) show a composition bias toward basic and acidic residues. A Glycyl lysine isopeptide (Lys-Gly) (interchain with G-Cter in SUMO2) cross-link involves residue Lys-98. Basic and acidic residues predominate over residues 109-119 (SARRSEPDRGR). Thr-121 is subject to Phosphothreonine. 4 positions are modified to phosphoserine: Ser-123, Ser-130, Ser-135, and Ser-136. The span at 130–140 (SDNEASSPRSS) shows a compositional bias: low complexity. Positions 141-195 (SRMEERLKAANLEMFKGKGMEERQQLIKQLRDELRLEEARLVLLKKLRQSQLQKE) form a coiled coil. Lys-148 participates in a covalent cross-link: Glycyl lysine isopeptide (Lys-Gly) (interchain with G-Cter in SUMO2). Residues 166 to 191 (LIKQLRDELRLEEARLVLLKKLRQSQ) form a CR1; interaction with MBD2 and MBD3 region. Lys-200 participates in a covalent cross-link: Glycyl lysine isopeptide (Lys-Gly) (interchain with G-Cter in SUMO2). A Phosphoserine modification is found at Ser-209. The tract at residues 214 to 237 (SPAHVGQQGLSKLPSRPGAQGIEP) is disordered. Residue Lys-282 forms a Glycyl lysine isopeptide (Lys-Gly) (interchain with G-Cter in SUMO2) linkage. A phosphoserine mark is found at Ser-334, Ser-339, and Ser-341. Residues 341–481 (SAMSDAANSQ…QEQEIEQRLQ (141 aa)) form a CR2; histone tail-binding region. Residues Lys-354, Lys-455, and Lys-468 each participate in a glycyl lysine isopeptide (Lys-Gly) (interchain with G-Cter in SUMO2) cross-link. Residues 415–468 (RVEPFVCAQCRTDFTPHWKQEKNGKILCEQCMTSNQKKALKAEHTNRLKNAFVK) form a GATA-type zinc finger. Positions 450 to 483 (QKKALKAEHTNRLKNAFVKALQQEQEIEQRLQQQ) form a coiled coil. Phosphoserine is present on Ser-487. Residue Lys-499 forms a Glycyl lysine isopeptide (Lys-Gly) (interchain with G-Cter in SUMO2) linkage.

In terms of assembly, homooligomer. Component of the nucleosome remodeling and deacetylase (NuRD) repressor complex, composed of core proteins MTA1, MTA2, MTA3, RBBP4, RBBP7, HDAC1, HDAC2, MBD2, MBD3, and peripherally associated proteins CDK2AP1, CDK2AP2, GATAD2A, GATAD2B, CHD3, CHD4 and CHD5. The exact stoichiometry of the NuRD complex is unknown, and some subunits such as MBD2 and MBD3, GATAD2A and GATAD2B, and CHD3, CHD4 and CHD5 define mutually exclusive NuRD complexes. Interacts with MBD2; this is required for the enhancement of MBD2-mediated repression and for targeting to the chromatin. Interacts with MBD3. Component of the MeCP1 histone deacetylase complex. Interacts with histone tails, including that of histones H2A, H2B, H3 and H4. Interacts with ERCC6.

It localises to the nucleus speckle. The protein resides in the nucleus. The protein localises to the chromosome. In terms of biological role, transcriptional repressor. Acts as a component of the histone deacetylase NuRD complex which participates in the remodeling of chromatin. Enhances MBD2-mediated repression. Efficient repression requires the presence of GATAD2A. Targets MBD3 to discrete loci in the nucleus. May play a role in synapse development. This chain is Transcriptional repressor p66-beta (Gatad2b), found in Mus musculus (Mouse).